The primary structure comprises 353 residues: Photosystem II protein D1 (353 aa).

Position 2 is an N-acetylthreonine (Thr2). At Thr2 the chain carries Phosphothreonine. A run of 3 helical transmembrane segments spans residues 29-46 (YIGW…TATA), 118-133 (HFLL…EWEL), and 142-156 (WIAV…AAAA). Chlorophyll a is bound at residue His118. Tyr126 lines the pheophytin a pocket. [CaMn4O5] cluster contacts are provided by Asp170 and Glu189. Residues 197–218 (FHMLGVAGVFGGSLFSAMHGSL) traverse the membrane as a helical segment. His198 contributes to the chlorophyll a binding site. A quinone contacts are provided by residues His215 and 264–265 (SF). His215 lines the Fe cation pocket. Position 272 (His272) interacts with Fe cation. The chain crosses the membrane as a helical span at residues 274–288 (FLAAWPVVGIWFTAL). Residues His332, Glu333, Asp342, and Ala344 each coordinate [CaMn4O5] cluster. The propeptide occupies 345–353 (SVEAPSVNG).

It belongs to the reaction center PufL/M/PsbA/D family. As to quaternary structure, PSII is composed of 1 copy each of membrane proteins PsbA, PsbB, PsbC, PsbD, PsbE, PsbF, PsbH, PsbI, PsbJ, PsbK, PsbL, PsbM, PsbT, PsbX, PsbY, PsbZ, Psb30/Ycf12, at least 3 peripheral proteins of the oxygen-evolving complex and a large number of cofactors. It forms dimeric complexes. The D1/D2 heterodimer binds P680, chlorophylls that are the primary electron donor of PSII, and subsequent electron acceptors. It shares a non-heme iron and each subunit binds pheophytin, quinone, additional chlorophylls, carotenoids and lipids. D1 provides most of the ligands for the Mn4-Ca-O5 cluster of the oxygen-evolving complex (OEC). There is also a Cl(-1) ion associated with D1 and D2, which is required for oxygen evolution. The PSII complex binds additional chlorophylls, carotenoids and specific lipids. serves as cofactor. Post-translationally, tyr-161 forms a radical intermediate that is referred to as redox-active TyrZ, YZ or Y-Z. In terms of processing, C-terminally processed by CTPA; processing is essential to allow assembly of the oxygen-evolving complex and thus photosynthetic growth.

The protein localises to the plastid. The protein resides in the chloroplast thylakoid membrane. It carries out the reaction 2 a plastoquinone + 4 hnu + 2 H2O = 2 a plastoquinol + O2. Functionally, photosystem II (PSII) is a light-driven water:plastoquinone oxidoreductase that uses light energy to abstract electrons from H(2)O, generating O(2) and a proton gradient subsequently used for ATP formation. It consists of a core antenna complex that captures photons, and an electron transfer chain that converts photonic excitation into a charge separation. The D1/D2 (PsbA/PsbD) reaction center heterodimer binds P680, the primary electron donor of PSII as well as several subsequent electron acceptors. The polypeptide is Photosystem II protein D1 (Huperzia lucidula (Shining clubmoss)).